Reading from the N-terminus, the 397-residue chain is Purine ribonucleoside efflux pump NepI (397 aa).

Over 1–21 (MNENIAEKFRADGVARPNWSA) the chain is Cytoplasmic. Residues 22-42 (VFAVAFCVACLITVEFLPVSL) traverse the membrane as a helical segment. Over 43 to 54 (LTPMAQDLGISE) the chain is Periplasmic. The chain crosses the membrane as a helical span at residues 55 to 75 (GVAGQSVTVTAFVAMFSSLFI). The Cytoplasmic segment spans residues 76–85 (TQIIQATDRR). A helical membrane pass occupies residues 86-106 (YIVILFAVLLTASCLMVSFAN). Residue S107 is a topological domain, periplasmic. The chain crosses the membrane as a helical span at residues 108-128 (FTLLLLGRACLGLALGGFWAM). Over 129–147 (SASLTMRLVPARTVPKALS) the chain is Cytoplasmic. Residues 148–168 (VIFGAVSIALVIAAPLGSFLG) form a helical membrane-spanning segment. Residues 169–175 (GIIGWRN) are Periplasmic-facing. A helical membrane pass occupies residues 176 to 196 (VFNAAAVMGVLCVIWVVKSLP). Topologically, residues 197–215 (SLPGEPSHQKQNMFSLLQR) are cytoplasmic. The helical transmembrane segment at 216–236 (PGVMAGMIAIFMSFAGQFAFF) threads the bilayer. Over 237 to 255 (TYIRPVYMNLAGFDVDGLT) the chain is Periplasmic. The helical transmembrane segment at 256-276 (LVLLSFGIASFVGTSFSSYVL) threads the bilayer. Topologically, residues 277 to 281 (KRSVK) are cytoplasmic. A helical transmembrane segment spans residues 282–302 (LALAGAPLLLALSALTLIVWG). Over 303-305 (SDK) the chain is Periplasmic. Residues 306–326 (TVAAVIAIIWGLAFALVPVGW) form a helical membrane-spanning segment. The Cytoplasmic segment spans residues 327–343 (STWITRSLADQAEKAGS). The chain crosses the membrane as a helical span at residues 344–364 (IQVAVIQLANTCGAAVGGYAL). Topologically, residues 365 to 366 (DN) are periplasmic. The helical transmembrane segment at 367–387 (FGLLSPLALSGGLMLLTALVV) threads the bilayer. Over 388 to 397 (AAKVRITPMS) the chain is Cytoplasmic.

It belongs to the major facilitator superfamily. DHA1 family. NepI (TC 2.A.1.2.26) subfamily.

It is found in the cell inner membrane. The catalysed reaction is inosine(in) + H(+)(out) = inosine(out) + H(+)(in). The enzyme catalyses guanosine(in) + H(+)(out) = guanosine(out) + H(+)(in). Involved in the efflux of purine ribonucleosides, such as inosine and guanosine. The sequence is that of Purine ribonucleoside efflux pump NepI from Salmonella paratyphi B (strain ATCC BAA-1250 / SPB7).